We begin with the raw amino-acid sequence, 212 residues long: tRNA(Phe) 7-((3-amino-3-carboxypropyl)-4-demethylwyosine(37)-N(4))-methyltransferase 2 (212 aa).

The protein belongs to the TYW3 family.

It carries out the reaction 4-demethyl-7-[(3S)-3-amino-3-carboxypropyl]wyosine(37) in tRNA(Phe) + S-adenosyl-L-methionine = 7-[(3S)-3-amino-3-carboxypropyl]wyosine(37) in tRNA(Phe) + S-adenosyl-L-homocysteine + H(+). In terms of biological role, S-adenosyl-L-methionine-dependent methyltransferase that acts as a component of the wyosine derivatives biosynthesis pathway. Probably methylates N-4 position of wybutosine-86 to produce wybutosine-72. The sequence is that of tRNA(Phe) 7-((3-amino-3-carboxypropyl)-4-demethylwyosine(37)-N(4))-methyltransferase 2 from Thermococcus kodakarensis (strain ATCC BAA-918 / JCM 12380 / KOD1) (Pyrococcus kodakaraensis (strain KOD1)).